Consider the following 809-residue polypeptide: MAATVYQRLHSVAVGVGSAAGSAIGSGSASLPGSGTGSGSGIGHAGNTSSSTSSALLSHSQLTRSLERILEEAHFSGELILTNRKLKDFPRTGTKYSLTDTVIADLSRNRFAELPEEVTTFAFLETLLLYHNTIRSIPESVKQLSSLTYLDLRSNQLSSLPREICFLPLQVLLVSNNRLTSLPDELGRLDQTLTDLDASYNQLANLPARLGELRSLRSLSLRSNHLLYLPRELTCLSLISLDVSNNKIASLPLEIRHMSTLVELQLENNPLTSPPASLCMRGLVHVFKFLETQATKDEKGSRSGGNYDGYTTLRRAPRHNSSGNVLEASTTGSTNNQRRHQVDSGYNTSDGLDKRWSHDAPTKSKTDSPLHCVSNSTAATLPRTLPSAVHSQADLMDASLTSSTSTIVDESLTLSPTASPCKLSYAHSNSSSNGSSPDQDDDIMLDHQERTVHHANGRSGKGLGNIQTYKEYKEALKQQRNQEISVYKQKHPNANHSPNDDEDLSPSPPSISNGSSSNTLPKSIMKQNSNQIGHNGNGNGSANGNGVDDVVIPKKPIQKVIPSRITEIKPASTSDIRSANSSDCLGYVKPQSPMKNGTSKFNTSNGGGVQTTVGIVSSTTIKSPVSSTTKLGTVKTHRSVTWNHDIPAEKLSFTMRREFDRQREETELMSQLRTIIETRLKMTLPVDIASALTDGVILCHLANYVRPRSVASIHVPSPGVNKLTMARCRRNVDNFLEACRRIGVDENLICCAADVLEGKGAVQVAITVGELFRLHGNGGCGSGNSSGAATPTKSPTRTTRATMSPTPLA.

A disordered region spans residues 27–53 (GSASLPGSGTGSGSGIGHAGNTSSSTS). Positions 34-44 (SGTGSGSGIGH) are enriched in gly residues. LRR repeat units lie at residues 72–96 (EAHF…GTKY), 98–121 (LTDT…VTTF), 122–144 (AFLE…VKQL), 145–168 (SSLT…CFLP), 170–189 (QVLL…LGRL), 191–213 (QTLT…LGEL), 214–236 (RSLR…LTCL), 238–258 (LISL…IRHM), and 260–282 (TLVE…CMRG). 3 disordered regions span residues 295 to 373 (TKDE…LHCV), 423 to 442 (LSYA…QDDD), and 490 to 550 (KHPN…VDDV). The segment covering 319–336 (HNSSGNVLEASTTGSTNN) has biased composition (polar residues). The span at 351-368 (GLDKRWSHDAPTKSKTDS) shows a compositional bias: basic and acidic residues. Residues 518–532 (NTLPKSIMKQNSNQI) are compositionally biased toward polar residues. Residues 662–776 (QREETELMSQ…TVGELFRLHG (115 aa)) enclose the Calponin-homology (CH) domain. Residues 783-809 (GNSSGAATPTKSPTRTTRATMSPTPLA) are disordered. The span at 788 to 809 (AATPTKSPTRTTRATMSPTPLA) shows a compositional bias: polar residues.

The protein localises to the cytoplasm. Its subcellular location is the cytoskeleton. It localises to the cell cortex. The protein resides in the cleavage furrow. In terms of biological role, may play a role in the stabilization of the actin-rich cell cortex during cell division. The protein is Leucine-rich repeat and calponin homology domain-containing protein of Drosophila melanogaster (Fruit fly).